The sequence spans 400 residues: NADH-quinone oxidoreductase subunit D (400 aa).

It belongs to the complex I 49 kDa subunit family. As to quaternary structure, NDH-1 is composed of 14 different subunits. Subunits NuoB, C, D, E, F, and G constitute the peripheral sector of the complex.

It is found in the cell inner membrane. It catalyses the reaction a quinone + NADH + 5 H(+)(in) = a quinol + NAD(+) + 4 H(+)(out). NDH-1 shuttles electrons from NADH, via FMN and iron-sulfur (Fe-S) centers, to quinones in the respiratory chain. The immediate electron acceptor for the enzyme in this species is believed to be ubiquinone. Couples the redox reaction to proton translocation (for every two electrons transferred, four hydrogen ions are translocated across the cytoplasmic membrane), and thus conserves the redox energy in a proton gradient. This chain is NADH-quinone oxidoreductase subunit D, found in Granulibacter bethesdensis (strain ATCC BAA-1260 / CGDNIH1).